A 639-amino-acid polypeptide reads, in one-letter code: 3D-(3,5/4)-trihydroxycyclohexane-1,2-dione hydrolase (639 aa).

E65 contacts thiamine diphosphate. Positions 437–517 (SLPGDLQRMW…INIILFDNSG (81 aa)) are thiamine pyrophosphate binding. Residues D488 and N515 each contribute to the Mg(2+) site.

Belongs to the TPP enzyme family. Mg(2+) is required as a cofactor. It depends on thiamine diphosphate as a cofactor.

The enzyme catalyses 3D-3,5/4-trihydroxycyclohexane-1,2-dione + H2O = 5-deoxy-D-glucuronate + H(+). It functions in the pathway polyol metabolism; myo-inositol degradation into acetyl-CoA; acetyl-CoA from myo-inositol: step 3/7. Its function is as follows. Involved in the cleavage of the C1-C2 bond of 3D-(3,5/4)-trihydroxycyclohexane-1,2-dione (THcHDO) to yield 5-deoxy-glucuronate (5DG). This Geobacillus thermodenitrificans (strain NG80-2) protein is 3D-(3,5/4)-trihydroxycyclohexane-1,2-dione hydrolase.